The sequence spans 510 residues: 2,3-bisphosphoglycerate-independent phosphoglycerate mutase (510 aa).

Residues aspartate 14 and serine 64 each coordinate Mn(2+). Serine 64 functions as the Phosphoserine intermediate in the catalytic mechanism. Substrate contacts are provided by residues histidine 125, 155–156, arginine 187, arginine 193, 259–262, and lysine 332; these read RD and RADR. 5 residues coordinate Mn(2+): aspartate 399, histidine 403, aspartate 440, histidine 441, and histidine 459.

It belongs to the BPG-independent phosphoglycerate mutase family. In terms of assembly, monomer. Requires Mn(2+) as cofactor.

It carries out the reaction (2R)-2-phosphoglycerate = (2R)-3-phosphoglycerate. It participates in carbohydrate degradation; glycolysis; pyruvate from D-glyceraldehyde 3-phosphate: step 3/5. Its function is as follows. Catalyzes the interconversion of 2-phosphoglycerate and 3-phosphoglycerate. In Ectopseudomonas mendocina (strain ymp) (Pseudomonas mendocina), this protein is 2,3-bisphosphoglycerate-independent phosphoglycerate mutase.